We begin with the raw amino-acid sequence, 308 residues long: Adipolin (308 aa).

An N-terminal signal peptide occupies residues 1–21 (MWAWGWAAAALLWLQTAGAGA). The segment at 36–119 (DSPNITTSNR…PPGSPGVGVT (84 aa)) is disordered. Residue N39 is glycosylated (N-linked (GlcNAc...) asparagine). Positions 82-93 (RKRCRGRDKKSR) are enriched in basic residues. The segment covering 99-113 (PGPPGPPGPPGPPGS) has biased composition (pro residues). The region spanning 153–308 (QRLVVEAFYC…SSFSGMLLGT (156 aa)) is the C1q domain.

It belongs to the adipolin/erythroferrone family. In terms of assembly, homomultimer; disulfide-linked. Adipolin fC1QTNF12: homotrimer; disulfide-linked. Adipolin gC1QTNF12: homodimer; disulfide-linked. May interact with ERFE. Processed into Adipolin fC1QTNF12 and Adipolin gC1QTNF12 by FURIN. Insulin enhances endogenous C1QTNF12 cleavage. In terms of tissue distribution, widely expressed, with high expression in subcutaneous and epididymal white adipose tissues and brown adipose tissue. Expressed in adipocytes (at protein level).

The protein resides in the secreted. Insulin-sensitizing adipocyte-secreted protein (adipokine) that regulates glucose metabolism in liver and adipose tissue. Promotes glucose uptake in adipocytes and suppresses de novo glucose production in hepatocytes via the PI3K-Akt signaling pathway. Administration lead to reduction of blood glucose. Able to attenuate inflammation in fat tissue. Its function is as follows. Acts by activating the Akt signaling in hepatocytes and adipocytes. Not able to increase insulin-stimulated glucose uptake in adipocytes. Functionally, acts by activating the MAP kinase. Increases insulin-stimulated glucose uptake in adipocytes. This chain is Adipolin (C1qtnf12), found in Mus musculus (Mouse).